A 344-amino-acid polypeptide reads, in one-letter code: Phenylalanine--tRNA ligase alpha subunit (344 aa).

Residue Glu256 participates in Mg(2+) binding.

Belongs to the class-II aminoacyl-tRNA synthetase family. Phe-tRNA synthetase alpha subunit type 1 subfamily. Tetramer of two alpha and two beta subunits. Requires Mg(2+) as cofactor.

It is found in the cytoplasm. The catalysed reaction is tRNA(Phe) + L-phenylalanine + ATP = L-phenylalanyl-tRNA(Phe) + AMP + diphosphate + H(+). This Bacillus licheniformis (strain ATCC 14580 / DSM 13 / JCM 2505 / CCUG 7422 / NBRC 12200 / NCIMB 9375 / NCTC 10341 / NRRL NRS-1264 / Gibson 46) protein is Phenylalanine--tRNA ligase alpha subunit.